Consider the following 77-residue polypeptide: LKKSLFLVTFLALVPLFLCEEEKREEENEERQDDDQSEEKRNLVSALIEGRKYLKNVLKKLNRLKEKNKAKNSKENN.

A signal peptide spans 1 to 19 (LKKSLFLVTFLALVPLFLC). A propeptide spanning residues 20–39 (EEEKREEENEERQDDDQSEE) is cleaved from the precursor.

It belongs to the frog skin active peptide (FSAP) family. In terms of tissue distribution, expressed by the skin glands.

It is found in the secreted. Functionally, has antimicrobial activity. This is Distinctin-like peptide from Pithecopus azureus (Orange-legged monkey tree frog).